The primary structure comprises 1024 residues: Beta-galactosidase (1024 aa).

2 residues coordinate substrate: Asn103 and Asp202. Na(+) is bound at residue Asp202. Residues Glu417, His419, and Glu462 each contribute to the Mg(2+) site. Substrate is bound by residues Glu462 and 538–541 (EYAH). The Proton donor role is filled by Glu462. Glu538 (nucleophile) is an active-site residue. Position 598 (Asn598) interacts with Mg(2+). Na(+) contacts are provided by Phe602 and Asn605. The substrate site is built by Asn605 and Trp1000.

Belongs to the glycosyl hydrolase 2 family. In terms of assembly, homotetramer. Mg(2+) is required as a cofactor. Requires Mn(2+) as cofactor. The cofactor is Na(+).

The catalysed reaction is Hydrolysis of terminal non-reducing beta-D-galactose residues in beta-D-galactosides.. Inhibited by phenylethyl thio-beta-D-galactoside (PETG), isopropyl thio-beta-D-galactoside (IPTG), L-ribose, D-galactonolactone, lactose and 2-amino-D-galactose. This chain is Beta-galactosidase (lacZ), found in Escherichia coli (strain K12).